A 293-amino-acid chain; its full sequence is Formamidopyrimidine-DNA glycosylase (293 aa).

Proline 2 acts as the Schiff-base intermediate with DNA in catalysis. The active-site Proton donor is the glutamate 3. Lysine 58 serves as the catalytic Proton donor; for beta-elimination activity. The DNA site is built by histidine 104, arginine 123, and lysine 166. The FPG-type zinc finger occupies 257-293 (AVYDREGERCRTPGCNGTVKRLVQNGRSTFWCSGCQT). Arginine 283 serves as the catalytic Proton donor; for delta-elimination activity.

It belongs to the FPG family. Monomer. The cofactor is Zn(2+).

The enzyme catalyses Hydrolysis of DNA containing ring-opened 7-methylguanine residues, releasing 2,6-diamino-4-hydroxy-5-(N-methyl)formamidopyrimidine.. It carries out the reaction 2'-deoxyribonucleotide-(2'-deoxyribose 5'-phosphate)-2'-deoxyribonucleotide-DNA = a 3'-end 2'-deoxyribonucleotide-(2,3-dehydro-2,3-deoxyribose 5'-phosphate)-DNA + a 5'-end 5'-phospho-2'-deoxyribonucleoside-DNA + H(+). In terms of biological role, involved in base excision repair of DNA damaged by oxidation or by mutagenic agents. Acts as a DNA glycosylase that recognizes and removes damaged bases. Has a preference for oxidized purines, such as 7,8-dihydro-8-oxoguanine (8-oxoG). Has AP (apurinic/apyrimidinic) lyase activity and introduces nicks in the DNA strand. Cleaves the DNA backbone by beta-delta elimination to generate a single-strand break at the site of the removed base with both 3'- and 5'-phosphates. The polypeptide is Formamidopyrimidine-DNA glycosylase (Rhodopseudomonas palustris (strain HaA2)).